Reading from the N-terminus, the 71-residue chain is uncharacterized protein (71 aa).

Residues 37–57 (IGVGVSDGVSAGVGVGVAMII) form a helical membrane-spanning segment.

The protein resides in the membrane. This is an uncharacterized protein from Dictyostelium discoideum (Social amoeba).